The chain runs to 526 residues: MVEILDYTKALEVLKEYPGDGLHVDTLLDSDSHGALTYNDFLILPGSITFPASDVSLETRVTRRFTIKAPLLSSPMDTVTEHSMAIHMALLGGLGVIHNNCPPDEQAEMVRKVKRYENGFIQDPIVLSPETTVGEAKELKTKWGFGGFPVTEKGTLHSKLLGIVTSRDIQFHKNHEDPVTAVMATDLVTAPAGTTLAEANEVLRSSKKGKLPIVDKDGSLISLLSRSDLMKNIHYPLASKLPSKQLLCAAAISTHDADKVRLQKLVDAGLDIVVVDSSQGHSTFQIAMIKYIKQNFPDIDVIGGNIVTREQAAALIAAGADGLRIGMGSGSACITQEVMAAGRPQAAAVRSVSAFAARFGVPTIADGGVQNLGHIVKGLALGASAVMMGSLLAGTTESPGEYFMSSEGQLVKAFRGMGSIAVMEDKSKSGAGNNAGASRYFSENDKVKVAQGVAGSVIDRGSITQYVPYLVAGVQHSLQDIGVQNLDALREGVNNGTVRFEMRSASAQTEGNVHGLHTHEKKLYSS.

CBS domains are found at residues 120–179 (FIQD…EDPV) and 183–239 (MATD…PLAS). NAD(+) contacts are provided by residues 276–278 (DSS) and 326–328 (GMG). K(+) contacts are provided by glycine 328 and glycine 330. Serine 331 contributes to the IMP binding site. A K(+)-binding site is contributed by cysteine 333. The active-site Thioimidate intermediate is cysteine 333. IMP-binding positions include 366 to 368 (DGG) and 389 to 390 (GS). The active-site Proton acceptor is the arginine 439. Residue glutamine 451 participates in IMP binding. Serine 506 serves as a coordination point for K(+). Residues 506–526 (SAQTEGNVHGLHTHEKKLYSS) form a disordered region. Basic and acidic residues predominate over residues 517–526 (HTHEKKLYSS).

It belongs to the IMPDH/GMPR family. Homotetramer. It depends on K(+) as a cofactor.

Its subcellular location is the cytoplasm. It carries out the reaction IMP + NAD(+) + H2O = XMP + NADH + H(+). It functions in the pathway secondary metabolite biosynthesis; terpenoid biosynthesis. Its activity is regulated as follows. Mycophenolic acid (MPA) is a non-competitive inhibitor that prevents formation of the closed enzyme conformation by binding to the same site as the amobile flap. In contrast, mizoribine monophosphate (MZP) is a competitive inhibitor that induces the closed conformation. MPA is a potent inhibitor of mammalian IMPDHs but a poor inhibitor of the bacterial enzymes. MZP is a more potent inhibitor of bacterial IMPDH. Its function is as follows. Catalyzes the conversion of inosine 5'-phosphate (IMP) to xanthosine 5'-phosphate (XMP), the first committed and rate-limiting step in the de novo synthesis of guanine nucleotides, and therefore plays an important role in the regulation of cell growth. Part of the gene cluster that mediates the biosynthesis of mycophenolic acid (MPA), the first isolated antibiotic natural product in the world. Does not play a role in the biosynthesis of MPA, but is involved in self resistance to MPA, since MPA acts as an inhibitor of IMP dehydrogenases. This is Inosine-5'-monophosphate dehydrogenase from Penicillium roqueforti (strain FM164).